Reading from the N-terminus, the 188-residue chain is Holliday junction branch migration complex subunit RuvA (188 aa).

The segment at 1–64 (MIAGISGRVL…QDGITLYGFS (64 aa)) is domain I. The tract at residues 65 to 143 (NERKKELFLS…SAGIKDMRIY (79 aa)) is domain II. Position 143 (Y143) is a region of interest, flexible linker. The segment at 143–188 (YHESLEALISLGYPEKQAREAVKHVYREGMKTSELIKEALKFLSQR) is domain III.

The protein belongs to the RuvA family. As to quaternary structure, homotetramer. Forms an RuvA(8)-RuvB(12)-Holliday junction (HJ) complex. HJ DNA is sandwiched between 2 RuvA tetramers; dsDNA enters through RuvA and exits via RuvB. An RuvB hexamer assembles on each DNA strand where it exits the tetramer. Each RuvB hexamer is contacted by two RuvA subunits (via domain III) on 2 adjacent RuvB subunits; this complex drives branch migration. In the full resolvosome a probable DNA-RuvA(4)-RuvB(12)-RuvC(2) complex forms which resolves the HJ.

It localises to the cytoplasm. The RuvA-RuvB-RuvC complex processes Holliday junction (HJ) DNA during genetic recombination and DNA repair, while the RuvA-RuvB complex plays an important role in the rescue of blocked DNA replication forks via replication fork reversal (RFR). RuvA specifically binds to HJ cruciform DNA, conferring on it an open structure. The RuvB hexamer acts as an ATP-dependent pump, pulling dsDNA into and through the RuvAB complex. HJ branch migration allows RuvC to scan DNA until it finds its consensus sequence, where it cleaves and resolves the cruciform DNA. In Thermotoga petrophila (strain ATCC BAA-488 / DSM 13995 / JCM 10881 / RKU-1), this protein is Holliday junction branch migration complex subunit RuvA.